Consider the following 1116-residue polypeptide: Error-prone DNA polymerase (1116 aa).

The protein belongs to the DNA polymerase type-C family. DnaE2 subfamily.

It is found in the cytoplasm. It carries out the reaction DNA(n) + a 2'-deoxyribonucleoside 5'-triphosphate = DNA(n+1) + diphosphate. DNA polymerase involved in damage-induced mutagenesis and translesion synthesis (TLS). It is not the major replicative DNA polymerase. This Sinorhizobium medicae (strain WSM419) (Ensifer medicae) protein is Error-prone DNA polymerase.